The following is a 44-amino-acid chain: Conotoxin Cl9a (44 aa).

A 4-carboxyglutamate mark is found at Glu-7, Glu-8, and Glu-24. 3 disulfides stabilise this stretch: Cys-9–Cys-33, Cys-15–Cys-40, and Cys-23–Cys-42.

Expressed by the venom duct.

Its subcellular location is the secreted. The protein is Conotoxin Cl9a of Californiconus californicus (California cone).